The chain runs to 452 residues: Pup--protein ligase (452 aa).

Glu-9 is a binding site for Mg(2+). Arg-53 contributes to the ATP binding site. Mg(2+) is bound at residue Tyr-55. Residue Asp-57 is the Proton acceptor of the active site. A Mg(2+)-binding site is contributed by Glu-63. ATP is bound by residues Thr-66 and Trp-419.

It belongs to the Pup ligase/Pup deamidase family. Pup-conjugating enzyme subfamily.

It catalyses the reaction ATP + [prokaryotic ubiquitin-like protein]-L-glutamate + [protein]-L-lysine = ADP + phosphate + N(6)-([prokaryotic ubiquitin-like protein]-gamma-L-glutamyl)-[protein]-L-lysine.. It functions in the pathway protein degradation; proteasomal Pup-dependent pathway. The protein operates within protein modification; protein pupylation. Its function is as follows. Catalyzes the covalent attachment of the prokaryotic ubiquitin-like protein modifier Pup to the proteasomal substrate proteins, thereby targeting them for proteasomal degradation. This tagging system is termed pupylation. The ligation reaction involves the side-chain carboxylate of the C-terminal glutamate of Pup and the side-chain amino group of a substrate lysine. The sequence is that of Pup--protein ligase from Rhodococcus jostii (strain RHA1).